Reading from the N-terminus, the 589-residue chain is Mitoguardin 2 (589 aa).

2 consecutive transmembrane segments (helical) span residues 11-31 (IIQALAMTVAEIPVFLYTTFG) and 42-62 (PGLRKVLFATALGTVALALAA). The segment at 87-134 (VPGSVLPVRRSSSAKKGYSRSRVQSPSSKSNDTLSGISSLDPSKHSSS) is disordered. 2 stretches are compositionally biased toward low complexity: residues 106–116 (RSRVQSPSSKS) and 123–134 (ISSLDPSKHSSS).

Belongs to the mitoguardin family. Homodimer and heterodimer; forms heterodimers with miga1.

It is found in the mitochondrion outer membrane. In terms of biological role, regulator of mitochondrial fusion: acts by forming homo- and heterodimers at the mitochondrial outer membrane and facilitating the formation of pld6/MitoPLD dimers. May act by regulating phospholipid metabolism via pld6/MitoPLD. The sequence is that of Mitoguardin 2 from Xenopus laevis (African clawed frog).